A 240-amino-acid chain; its full sequence is Transcriptional regulatory protein ResD (240 aa).

The Response regulatory domain occupies 8-121 (KILVVDDEAR…EVVLRVKALL (114 aa)). Residue D57 is modified to 4-aspartylphosphate. A DNA-binding region (ompR/PhoB-type) is located at residues 137–237 (KNVLVFSHLS…VWGVGYKFEV (101 aa)).

Interacts with the RNA polymerase core. Post-translationally, phosphorylated by ResE.

The protein localises to the cytoplasm. In terms of biological role, member of the two-component regulatory system ResD/ResE. Required for the expression of resA, ctaA, qcrABC and fnr; activation role in global regulation of aerobic and anaerobic respiration. This chain is Transcriptional regulatory protein ResD (resD), found in Bacillus subtilis (strain 168).